Reading from the N-terminus, the 721-residue chain is Phosphomethylpyrimidine synthase (721 aa).

Substrate-binding positions include Asn-256, Met-285, Tyr-314, His-350, 370–372 (SRG), 411–414 (DGMR), and Glu-450. His-454 serves as a coordination point for Zn(2+). Tyr-477 serves as a coordination point for substrate. His-518 is a binding site for Zn(2+). [4Fe-4S] cluster is bound by residues Cys-598, Cys-601, and Cys-606.

The protein belongs to the ThiC family. Homodimer. [4Fe-4S] cluster is required as a cofactor.

It catalyses the reaction 5-amino-1-(5-phospho-beta-D-ribosyl)imidazole + S-adenosyl-L-methionine = 4-amino-2-methyl-5-(phosphooxymethyl)pyrimidine + CO + 5'-deoxyadenosine + formate + L-methionine + 3 H(+). The protein operates within cofactor biosynthesis; thiamine diphosphate biosynthesis. Catalyzes the synthesis of the hydroxymethylpyrimidine phosphate (HMP-P) moiety of thiamine from aminoimidazole ribotide (AIR) in a radical S-adenosyl-L-methionine (SAM)-dependent reaction. The chain is Phosphomethylpyrimidine synthase from Shewanella oneidensis (strain ATCC 700550 / JCM 31522 / CIP 106686 / LMG 19005 / NCIMB 14063 / MR-1).